Consider the following 352-residue polypeptide: Beta-1,4-xylanase (352 aa).

An N-terminal signal peptide occupies residues 1 to 23 (MINQRFSILVLLLILLTFSLGFL). Residues 29-352 (GMEIPSLKEV…KKAFWEIVKF (324 aa)) enclose the GH10 domain. Glu155 serves as the catalytic Proton donor. Glu262 acts as the Nucleophile in catalysis.

It belongs to the glycosyl hydrolase 10 (cellulase F) family.

Its subcellular location is the secreted. It catalyses the reaction Endohydrolysis of (1-&gt;4)-beta-D-xylosidic linkages in xylans.. The protein operates within glycan degradation; xylan degradation. The polypeptide is Beta-1,4-xylanase (xynA) (Dictyoglomus thermophilum).